The following is a 418-amino-acid chain: Dual-specificity RNA methyltransferase RlmN (418 aa).

Positions 1–21 are disordered; the sequence is MADTSLMPIPGQVDPVPAPRD. The active-site Proton acceptor is Glu-122. One can recognise a Radical SAM core domain in the interval 128–383; the sequence is DADRGTLCVS…APVRTPRGRD (256 aa). A disulfide bridge connects residues Cys-135 and Cys-388. The [4Fe-4S] cluster site is built by Cys-142, Cys-146, and Cys-149. S-adenosyl-L-methionine contacts are provided by residues 212–213, Ser-244, 266–268, and Asn-345; these read GE and SLH. The active-site S-methylcysteine intermediate is Cys-388. The segment at 393–418 is disordered; sequence TAAQKKSRAERDREAAAEAEAAASQA. The span at 399-408 shows a compositional bias: basic and acidic residues; sequence SRAERDREAA.

Belongs to the radical SAM superfamily. RlmN family. [4Fe-4S] cluster is required as a cofactor.

Its subcellular location is the cytoplasm. The enzyme catalyses adenosine(2503) in 23S rRNA + 2 reduced [2Fe-2S]-[ferredoxin] + 2 S-adenosyl-L-methionine = 2-methyladenosine(2503) in 23S rRNA + 5'-deoxyadenosine + L-methionine + 2 oxidized [2Fe-2S]-[ferredoxin] + S-adenosyl-L-homocysteine. It catalyses the reaction adenosine(37) in tRNA + 2 reduced [2Fe-2S]-[ferredoxin] + 2 S-adenosyl-L-methionine = 2-methyladenosine(37) in tRNA + 5'-deoxyadenosine + L-methionine + 2 oxidized [2Fe-2S]-[ferredoxin] + S-adenosyl-L-homocysteine. Functionally, specifically methylates position 2 of adenine 2503 in 23S rRNA and position 2 of adenine 37 in tRNAs. m2A2503 modification seems to play a crucial role in the proofreading step occurring at the peptidyl transferase center and thus would serve to optimize ribosomal fidelity. This Erythrobacter litoralis (strain HTCC2594) protein is Dual-specificity RNA methyltransferase RlmN.